A 345-amino-acid polypeptide reads, in one-letter code: 4-hydroxy-3-methylbut-2-en-1-yl diphosphate synthase (flavodoxin) (345 aa).

Positions 271, 274, 306, and 313 each coordinate [4Fe-4S] cluster.

This sequence belongs to the IspG family. [4Fe-4S] cluster is required as a cofactor.

The enzyme catalyses (2E)-4-hydroxy-3-methylbut-2-enyl diphosphate + oxidized [flavodoxin] + H2O + 2 H(+) = 2-C-methyl-D-erythritol 2,4-cyclic diphosphate + reduced [flavodoxin]. It functions in the pathway isoprenoid biosynthesis; isopentenyl diphosphate biosynthesis via DXP pathway; isopentenyl diphosphate from 1-deoxy-D-xylulose 5-phosphate: step 5/6. In terms of biological role, converts 2C-methyl-D-erythritol 2,4-cyclodiphosphate (ME-2,4cPP) into 1-hydroxy-2-methyl-2-(E)-butenyl 4-diphosphate. The protein is 4-hydroxy-3-methylbut-2-en-1-yl diphosphate synthase (flavodoxin) of Haemophilus influenzae (strain PittEE).